The chain runs to 328 residues: MRPIILQGHERPLTQIKYNHDGDLLFSCAKDKVINVWFSHNGERLGTYEGHTGAIWTCDINKSSTLMVSGAADNTMRLWDVKTGKQLYKWEFPTAVKRVEFNEDDTRILAVTEERMGYAGTVTVFRVPISESDAAAETPLYVITTRESKATVAGWSYLSKFLFTGHEDGSVSRYDAITGEFVESKQVHNSGSTITDLQFYPDRTYFITSCKDTTAKAIDVDSFEVIKTYLTDTPLNTSSFTPVQDFVILGGGQEARDVTTTAARQGKFEARFYHAILEEELGRVKGHFGPINTIAVHPKGTGYASGGEDGYVRVHFFDKNYFDFKYTL.

WD repeat units follow at residues 8-49 (GHER…GTYE), 50-89 (GHTGAIWTCDINKSSTLMVSGAADNTMRLWDVKTGKQLYK), 145-184 (TRESKATVAGWSYLSKFLFTGHEDGSVSRYDAITGEFVES), 189-228 (NSGSTITDLQFYPDRTYFITSCKDTTAKAIDVDSFEVIKT), and 286-327 (GHFG…FKYT).

The protein belongs to the eIF-3 subunit I family. Component of the eukaryotic translation initiation factor 3 (eIF-3) complex. The eIF-3 complex appears to include tif32/eif3a, SPAC25G10.08/eif3b, tif33/eif3c, SPBC4C3.07/eif3f, tif35/eif3g and sum1/eif3i. This set of common subunits may also associate exclusively with either moe1/eif3d and int6/eif3e, or with SPAC821.05/eif3h and SPAC1751.03/eif3m. The eIF-3 complex may also include SPAC3A12.13c/eif3j.

The protein localises to the cytoplasm. The protein resides in the nucleus. In terms of biological role, component of the eukaryotic translation initiation factor 3 (eIF-3) complex, which is involved in protein synthesis of a specialized repertoire of mRNAs and, together with other initiation factors, stimulates binding of mRNA and methionyl-tRNAi to the 40S ribosome. The eIF-3 complex specifically targets and initiates translation of a subset of mRNAs involved in cell proliferation. The sequence is that of Eukaryotic translation initiation factor 3 subunit I (sum1) from Schizosaccharomyces pombe (strain 972 / ATCC 24843) (Fission yeast).